We begin with the raw amino-acid sequence, 748 residues long: Cysteine--tRNA ligase, cytoplasmic (748 aa).

The interval M1–Q25 is disordered. A2 carries the N-acetylalanine modification. Residue S19 is modified to Phosphoserine. Position 55 (C55) interacts with Zn(2+). Residue G56 participates in L-cysteine binding. A 'HIGH' region motif is present at residues P57–H67. T96 provides a ligand contact to L-cysteine. The 'KIIK' region signature appears at K101 to K104. A phosphoserine mark is found at S305 and S307. Zn(2+)-binding residues include C348, H373, and E377. H373 is a binding site for L-cysteine. Positions K406–S410 match the 'KMSKS' region motif. ATP is bound at residue K409. Basic and acidic residues-rich tracts occupy residues K654–K679 and K700–S717. Disordered regions lie at residues K654 to P686 and K700 to A721. Phosphoserine is present on S746.

As to quaternary structure, homodimer. The cofactor is Zn(2+).

The protein resides in the cytoplasm. The enzyme catalyses tRNA(Cys) + L-cysteine + ATP = L-cysteinyl-tRNA(Cys) + AMP + diphosphate. Catalyzes the ATP-dependent ligation of cysteine to tRNA(Cys). The sequence is that of Cysteine--tRNA ligase, cytoplasmic (CARS1) from Macaca fascicularis (Crab-eating macaque).